We begin with the raw amino-acid sequence, 430 residues long: MKETIDFLIDTIEARQVLDSRGNPTVEAEVFLECGAIGRAIVPSGASTGAHEAHELRDGGTKYMGKGVLDAVNKIHETISPALCGLSALDQTIIDKLMIEIDGTPNKSNLGANSILAVSLANARAASKALDMPLYRYLGDPLSNLLPVPLMNVINGGAHAPNGLDCQEFMLVPHGVKTFSEALRMGTEIFHSLKSLLDKKGLSTAVGDEGGFAPELSSCEAAGDLLLEAIQKAGFIPGKQVSLALDVASTEFYRDGFYKYEGTNLTSSQMISYLSNLVSNYPIVSIEDGLGEDDWEGWAALNKEIGHKVQLVGDDLFVTNTERLRKGILEKSANSILIKVNQIGTLTETLEAMDLAKSAGFTSVISHRSGETEDTTIADLSVATRAGQIKTGSLSRSERIAKYNRLLRIEEELGNQARFAGDLGLGPKNI.

Gln167 contributes to the (2R)-2-phosphoglycerate binding site. Glu209 functions as the Proton donor in the catalytic mechanism. The Mg(2+) site is built by Asp246, Glu287, and Asp314. (2R)-2-phosphoglycerate-binding residues include Lys339, Arg368, Ser369, and Lys390. Catalysis depends on Lys339, which acts as the Proton acceptor.

This sequence belongs to the enolase family. Mg(2+) is required as a cofactor.

It localises to the cytoplasm. It is found in the secreted. The protein localises to the cell surface. The catalysed reaction is (2R)-2-phosphoglycerate = phosphoenolpyruvate + H2O. It participates in carbohydrate degradation; glycolysis; pyruvate from D-glyceraldehyde 3-phosphate: step 4/5. Catalyzes the reversible conversion of 2-phosphoglycerate (2-PG) into phosphoenolpyruvate (PEP). It is essential for the degradation of carbohydrates via glycolysis. The sequence is that of Enolase from Prochlorococcus marinus (strain MIT 9515).